Consider the following 179-residue polypeptide: ATP synthase subunit b (179 aa).

The helical transmembrane segment at 23–43 threads the bilayer; that stretch reads IFWLIITFGILYVVLSKLILP.

This sequence belongs to the ATPase B chain family. F-type ATPases have 2 components, F(1) - the catalytic core - and F(0) - the membrane proton channel. F(1) has five subunits: alpha(3), beta(3), gamma(1), delta(1), epsilon(1). F(0) has three main subunits: a(1), b(2) and c(10-14). The alpha and beta chains form an alternating ring which encloses part of the gamma chain. F(1) is attached to F(0) by a central stalk formed by the gamma and epsilon chains, while a peripheral stalk is formed by the delta and b chains.

The protein localises to the cell inner membrane. Functionally, f(1)F(0) ATP synthase produces ATP from ADP in the presence of a proton or sodium gradient. F-type ATPases consist of two structural domains, F(1) containing the extramembraneous catalytic core and F(0) containing the membrane proton channel, linked together by a central stalk and a peripheral stalk. During catalysis, ATP synthesis in the catalytic domain of F(1) is coupled via a rotary mechanism of the central stalk subunits to proton translocation. In terms of biological role, component of the F(0) channel, it forms part of the peripheral stalk, linking F(1) to F(0). In Pelagibacter ubique (strain HTCC1062), this protein is ATP synthase subunit b.